The primary structure comprises 386 residues: MATPSPLPSFAAIVVAAGKGLRAGQPVPKQFATWRGKPVLRHSVESLRAAGADPIVVAIPDHAGDVAAKALDGITEVVFVTGGQTRQDSVRAALERLSSVPPERVLIHDAARAILPTPVIERVLHGLDESGGAIPVLPVVDSLAVAAGERMADKADRESLRRVQTPQGFRFSDILAAHRAWTGATDAGDDAQVLMAHGGDIALVEGDEALKKLTFAEDFMADLLPVRVGTGFDVHKLEAGEELWLGGIRLEHDKGLAGHSDADVALHAIVDALLGAIGKGDIGDHFPPSDPQWKGAASSAFIEHAAKLVDEAGYRVGNIDLTIICEAPRIGPHRDAMGQRIAELLATSPDAISVKATTTEKLGFTGRGEGIAAQAAATVVRKDTPA.

The 2-C-methyl-D-erythritol 4-phosphate cytidylyltransferase stretch occupies residues 1 to 226; it reads MATPSPLPSF…EDFMADLLPV (226 aa). The 2-C-methyl-D-erythritol 2,4-cyclodiphosphate synthase stretch occupies residues 227–386; that stretch reads RVGTGFDVHK…ATVVRKDTPA (160 aa). D233 and H235 together coordinate a divalent metal cation. Residues 233–235 and 259–260 each bind 4-CDP-2-C-methyl-D-erythritol 2-phosphate; these read DVH and HS. An a divalent metal cation-binding site is contributed by H267. 4-CDP-2-C-methyl-D-erythritol 2-phosphate-binding positions include 281 to 283, 357 to 360, F364, and R367; these read DIG and TTTE.

In the N-terminal section; belongs to the IspD/TarI cytidylyltransferase family. IspD subfamily. This sequence in the C-terminal section; belongs to the IspF family. Requires a divalent metal cation as cofactor.

It carries out the reaction 2-C-methyl-D-erythritol 4-phosphate + CTP + H(+) = 4-CDP-2-C-methyl-D-erythritol + diphosphate. It catalyses the reaction 4-CDP-2-C-methyl-D-erythritol 2-phosphate = 2-C-methyl-D-erythritol 2,4-cyclic diphosphate + CMP. Its pathway is isoprenoid biosynthesis; isopentenyl diphosphate biosynthesis via DXP pathway; isopentenyl diphosphate from 1-deoxy-D-xylulose 5-phosphate: step 2/6. It participates in isoprenoid biosynthesis; isopentenyl diphosphate biosynthesis via DXP pathway; isopentenyl diphosphate from 1-deoxy-D-xylulose 5-phosphate: step 4/6. Functionally, bifunctional enzyme that catalyzes the formation of 4-diphosphocytidyl-2-C-methyl-D-erythritol from CTP and 2-C-methyl-D-erythritol 4-phosphate (MEP) (IspD), and catalyzes the conversion of 4-diphosphocytidyl-2-C-methyl-D-erythritol 2-phosphate (CDP-ME2P) to 2-C-methyl-D-erythritol 2,4-cyclodiphosphate (ME-CPP) with a corresponding release of cytidine 5-monophosphate (CMP) (IspF). In Erythrobacter litoralis (strain HTCC2594), this protein is Bifunctional enzyme IspD/IspF.